The sequence spans 664 residues: L-glutamate oxidase precursor (664 aa).

A signal peptide (tat-type signal) is located at residues 1–44 (MTEDHAVVRSDGGLSRRSFAAVAGTATVATALTSGVAAALPAPA). A105, E124, A125, R133, M161, R162, D638, W646, and I647 together coordinate FAD.

It belongs to the flavin monoamine oxidase family. LGOX subfamily. The mature enzyme is a heterohexamer composed of 2 alpha chains, 2 beta chains and 2 gamma chains (alpha2beta2gamma2). It depends on FAD as a cofactor. In terms of processing, predicted to be exported by the Tat system. The position of the signal peptide cleavage has not been experimentally proven. Post-translationally, the precursor form is proteolytically cleaved by an endopeptidase into alpha, beta and gamma chains, which form the stable mature enzyme.

The protein resides in the secreted. The enzyme catalyses L-glutamate + O2 + H2O = H2O2 + 2-oxoglutarate + NH4(+). With respect to regulation, activity is stimulated in the presence of Mn(2+), Ca(2+) or Mg(2+). Its function is as follows. Catalyzes the oxidative deamination of L-glutamate to 2-ketoglutarate along with the production of ammonia and hydrogen peroxide. This Streptomyces viridosporus (strain ATCC 14672 / DSM 40746 / JCM 4963 / KCTC 9882 / NRRL B-12104 / FH 1290) (Streptomyces ghanaensis) protein is L-glutamate oxidase precursor.